The chain runs to 145 residues: Basic phospholipase A2 cPm05 (145 aa).

Positions Met1–Ala21 are cleaved as a signal peptide. A propeptide spanning residues Ile22 to Leu27 is cleaved from the precursor. 7 cysteine pairs are disulfide-bonded: Cys38-Cys98, Cys54-Cys144, Cys56-Cys72, Cys71-Cys125, Cys78-Cys118, Cys87-Cys111, and Cys105-Cys116. Residues Tyr55, Gly57, and Gly59 each coordinate Ca(2+). His75 is an active-site residue. Asp76 serves as a coordination point for Ca(2+). The active site involves Asp119.

This sequence belongs to the phospholipase A2 family. Group I subfamily. D49 sub-subfamily. It depends on Ca(2+) as a cofactor. As to expression, expressed by the venom gland.

The protein localises to the secreted. It carries out the reaction a 1,2-diacyl-sn-glycero-3-phosphocholine + H2O = a 1-acyl-sn-glycero-3-phosphocholine + a fatty acid + H(+). In terms of biological role, PLA2 catalyzes the calcium-dependent hydrolysis of the 2-acyl groups in 3-sn-phosphoglycerides. This Laticauda semifasciata (Black-banded sea krait) protein is Basic phospholipase A2 cPm05.